Consider the following 537-residue polypeptide: Cytochrome P450 4F6 (537 aa).

Residue C468 coordinates heme.

This sequence belongs to the cytochrome P450 family. It depends on heme as a cofactor. High expression in liver and kidney. Lower expression in brain.

Its subcellular location is the endoplasmic reticulum membrane. The protein resides in the microsome membrane. The catalysed reaction is an organic molecule + reduced [NADPH--hemoprotein reductase] + O2 = an alcohol + oxidized [NADPH--hemoprotein reductase] + H2O + H(+). This Rattus norvegicus (Rat) protein is Cytochrome P450 4F6 (Cyp4f6).